The primary structure comprises 334 residues: Formamidase (334 aa).

A CN hydrolase domain is found at 14-260 (FLVAAIQFPV…WEIVTGEIYP (247 aa)). Glu60 (proton acceptor) is an active-site residue. Lys133 functions as the Proton donor in the catalytic mechanism. Residue Cys166 is the Nucleophile of the active site.

The protein belongs to the carbon-nitrogen hydrolase superfamily. Aliphatic amidase family. Homotetramer.

It catalyses the reaction formamide + H2O = formate + NH4(+). Inhibited by iodoacetate. Appears to be regulated by the fur protein, but this effect is not mediated at the transcriptional level. Is an aliphatic amidase with a restricted substrate specificity, as it only hydrolyzes formamide. Probably involved in the nitrogen metabolism of H.pylori. The protein is Formamidase (amiF) of Helicobacter pylori (strain ATCC 700392 / 26695) (Campylobacter pylori).